Here is a 172-residue protein sequence, read N- to C-terminus: uncharacterized protein (172 aa).

The segment at 22-64 is disordered; sequence RSVSSSPAAKQPAPGTVAQSFPPGELALRDETGGRGRGTRGIR.

This is an uncharacterized protein from Human cytomegalovirus (strain AD169) (HHV-5).